The sequence spans 175 residues: Transcription factor E (175 aa).

The HTH TFE/IIEalpha-type domain maps to A4–N88.

This sequence belongs to the TFE family. As to quaternary structure, monomer. Interaction with RNA polymerase subunits RpoF and RpoE is necessary for Tfe stimulatory transcription activity. Able to interact with Tbp and RNA polymerase in the absence of DNA promoter. Interacts both with the preinitiation and elongation complexes.

Its function is as follows. Transcription factor that plays a role in the activation of archaeal genes transcribed by RNA polymerase. Facilitates transcription initiation by enhancing TATA-box recognition by TATA-box-binding protein (Tbp), and transcription factor B (Tfb) and RNA polymerase recruitment. Not absolutely required for transcription in vitro, but particularly important in cases where Tbp or Tfb function is not optimal. It dynamically alters the nucleic acid-binding properties of RNA polymerases by stabilizing the initiation complex and destabilizing elongation complexes. Seems to translocate with the RNA polymerase following initiation and acts by binding to the non template strand of the transcription bubble in elongation complexes. The polypeptide is Transcription factor E (Saccharolobus islandicus (strain Y.N.15.51 / Yellowstone #2) (Sulfolobus islandicus)).